The following is a 283-amino-acid chain: uncharacterized protein (283 aa).

Solcar repeat units follow at residues 14 to 95, 102 to 185, and 190 to 274; these read QPVW…LKHL, NDHA…SEAV, and GLAL…TLQG. The next 6 membrane-spanning stretches (helical) occupy residues 20-40, 70-90, 105-125, 157-177, 184-204, and 249-266; these read TLAGGISSVICRFMIAPFDVI, GNVVAELLYLVYGAAEFVAFS, AVNFLCGTSAGIFATLTSYPL, FFPGLKFSVIQIGPYAGCFFM, AVLSPLGLALSSTLSGVIAGA, and GLSVSMLKVAPGRAITML.

Belongs to the mitochondrial carrier (TC 2.A.29) family.

It localises to the mitochondrion inner membrane. This is an uncharacterized protein from Schizosaccharomyces pombe (strain 972 / ATCC 24843) (Fission yeast).